Here is a 277-residue protein sequence, read N- to C-terminus: Trypsin-2 (277 aa).

The signal sequence occupies residues Met1–Cys19. Residues Ala20–Arg50 constitute a propeptide, activation peptide. Positions Val51–Gly276 constitute a Peptidase S1 domain. A disulfide bridge links Cys76 with Cys92. Active-site charge relay system residues include His91 and Asp136. Disulfide bonds link Cys201–Cys217 and Cys228–Cys252. The active-site Charge relay system is Ser232.

Belongs to the peptidase S1 family. In terms of tissue distribution, midgut.

Its subcellular location is the secreted. The enzyme catalyses Preferential cleavage: Arg-|-Xaa, Lys-|-Xaa.. In terms of biological role, major function may be to aid in digestion of the blood meal. This Anopheles gambiae (African malaria mosquito) protein is Trypsin-2 (TRYP2).